The chain runs to 523 residues: MSQQVIIFDTTLRDGEQALQASLSVKEKLQIALALERMGVDVMEVGFPVSSPGDFESVQTIARQVKNSRVCALARCVEKDIDVAAESLKVAEAFRIHTFIATSPMHIATKLRSTLDEVIERAIYMVKRARNYTDDVEFSCEDAGRTPIADLARVVEAAINAGATTINIPDTVGYTMPFEFAGIISGLYERVPNIDKAIISVHTHDDLGLAVGNSLAAVHAGARQVEGAMNGIGERAGNCSLEEVIMAIKVRKDILNVHTAINHQEIWRTSQLVSQICNMPIPANKAIVGSGAFAHSSGIHQDGVLKNRENYEIMTPESIGLNQIQLNLTSRSGRAAVKHRMDEMGYKESEYNLDNLYDAFLKLADKKGQVFDYDLEALAFIGKQQEEPEHFRLDYFSVQSGSNDIATAAVKLACGEEVKAEAANGNGPVDAVYQAINRITDYNVELVKYSLTAKGHGKDALGQVDIVTNYNGRRFHGVGLATDIVESSAKAMVHVLNNIWRAAEVEKELQRKTQHNENNKETV.

Residues 5 to 267 (VIIFDTTLRD…HTAINHQEIW (263 aa)) enclose the Pyruvate carboxyltransferase domain. The Mn(2+) site is built by Asp-14, His-202, His-204, and Asn-238. Residues 392-523 (RLDYFSVQSG…QHNENNKETV (132 aa)) are regulatory domain.

This sequence belongs to the alpha-IPM synthase/homocitrate synthase family. LeuA type 1 subfamily. As to quaternary structure, homodimer. Mn(2+) serves as cofactor.

Its subcellular location is the cytoplasm. The enzyme catalyses 3-methyl-2-oxobutanoate + acetyl-CoA + H2O = (2S)-2-isopropylmalate + CoA + H(+). The protein operates within amino-acid biosynthesis; L-leucine biosynthesis; L-leucine from 3-methyl-2-oxobutanoate: step 1/4. In terms of biological role, catalyzes the condensation of the acetyl group of acetyl-CoA with 3-methyl-2-oxobutanoate (2-ketoisovalerate) to form 3-carboxy-3-hydroxy-4-methylpentanoate (2-isopropylmalate). The protein is 2-isopropylmalate synthase of Shigella flexneri.